Consider the following 217-residue polypeptide: Small ribosomal subunit protein uS3 (217 aa).

The 69-residue stretch at 38-106 (IRKFVQKELA…QVHINIIEIK (69 aa)) folds into the KH type-2 domain.

Belongs to the universal ribosomal protein uS3 family. Part of the 30S ribosomal subunit. Forms a tight complex with proteins S10 and S14.

Functionally, binds the lower part of the 30S subunit head. Binds mRNA in the 70S ribosome, positioning it for translation. In Streptococcus gordonii (strain Challis / ATCC 35105 / BCRC 15272 / CH1 / DL1 / V288), this protein is Small ribosomal subunit protein uS3.